We begin with the raw amino-acid sequence, 411 residues long: NADH-quinone oxidoreductase subunit D (411 aa).

Belongs to the complex I 49 kDa subunit family. As to quaternary structure, NDH-1 is composed of 14 different subunits. Subunits NuoB, C, D, E, F, and G constitute the peripheral sector of the complex.

Its subcellular location is the cell inner membrane. The catalysed reaction is a quinone + NADH + 5 H(+)(in) = a quinol + NAD(+) + 4 H(+)(out). NDH-1 shuttles electrons from NADH, via FMN and iron-sulfur (Fe-S) centers, to quinones in the respiratory chain. The immediate electron acceptor for the enzyme in this species is believed to be ubiquinone. Couples the redox reaction to proton translocation (for every two electrons transferred, four hydrogen ions are translocated across the cytoplasmic membrane), and thus conserves the redox energy in a proton gradient. In Phenylobacterium zucineum (strain HLK1), this protein is NADH-quinone oxidoreductase subunit D.